A 272-amino-acid polypeptide reads, in one-letter code: Undecaprenyl-diphosphatase (272 aa).

The next 7 helical transmembrane spans lie at 42 to 62 (FGLS…VVFF), 92 to 112 (YLVL…EDFF), 120 to 140 (WVVV…EAVG), 149 to 169 (MGFA…VPGV), 194 to 214 (FLMS…EVLA), 224 to 244 (MFAV…RFFI), and 252 to 272 (LRAF…LLLL).

This sequence belongs to the UppP family.

The protein localises to the cell membrane. It carries out the reaction di-trans,octa-cis-undecaprenyl diphosphate + H2O = di-trans,octa-cis-undecaprenyl phosphate + phosphate + H(+). In terms of biological role, catalyzes the dephosphorylation of undecaprenyl diphosphate (UPP). Confers resistance to bacitracin. The protein is Undecaprenyl-diphosphatase of Rubrobacter xylanophilus (strain DSM 9941 / JCM 11954 / NBRC 16129 / PRD-1).